The primary structure comprises 234 residues: 1-(5-phosphoribosyl)-5-[(5-phosphoribosylamino)methylideneamino] imidazole-4-carboxamide isomerase (234 aa).

Asp9 serves as the catalytic Proton acceptor. Asp131 serves as the catalytic Proton donor.

This sequence belongs to the HisA/HisF family.

The protein localises to the cytoplasm. The enzyme catalyses 1-(5-phospho-beta-D-ribosyl)-5-[(5-phospho-beta-D-ribosylamino)methylideneamino]imidazole-4-carboxamide = 5-[(5-phospho-1-deoxy-D-ribulos-1-ylimino)methylamino]-1-(5-phospho-beta-D-ribosyl)imidazole-4-carboxamide. The protein operates within amino-acid biosynthesis; L-histidine biosynthesis; L-histidine from 5-phospho-alpha-D-ribose 1-diphosphate: step 4/9. This Staphylococcus carnosus (strain TM300) protein is 1-(5-phosphoribosyl)-5-[(5-phosphoribosylamino)methylideneamino] imidazole-4-carboxamide isomerase.